The primary structure comprises 76 residues: DNA-directed RNA polymerase subunit omega (76 aa).

Belongs to the RNA polymerase subunit omega family. In terms of assembly, the RNAP catalytic core consists of 2 alpha, 1 beta, 1 beta' and 1 omega subunit. When a sigma factor is associated with the core the holoenzyme is formed, which can initiate transcription.

The enzyme catalyses RNA(n) + a ribonucleoside 5'-triphosphate = RNA(n+1) + diphosphate. Functionally, promotes RNA polymerase assembly. Latches the N- and C-terminal regions of the beta' subunit thereby facilitating its interaction with the beta and alpha subunits. In Aquifex aeolicus (strain VF5), this protein is DNA-directed RNA polymerase subunit omega (rpoZ).